The sequence spans 252 residues: MIHLLIVDALNLIRRIHAVQGSPCIPACEHALRQLIQHSHPTHAVAVFDEENRNHSWRHQILPDYKAGRSPMPDNLQQEMPQIRASFEQQGVTCWHAKGHEADDLAATLAVKVTAAGHNVTIVSTDKGYCQLLSPNIRIRDYFQKRWLDMPFVQQEFGVLPEQLPDYWGLAGISSSKIPGIQGIGPKTAATLLQQAGTLDNLFQHLDQQPEKWRNKLESNQEIAFISREVASLRTDLALKGNLQQLRLTIAT.

Asp-103 is a Mg(2+) binding site. Positions 159-248 (VLPEQLPDYW…LKGNLQQLRL (90 aa)) constitute a 5'-3' exonuclease domain. 5 residues coordinate K(+): Leu-170, Ala-171, Pro-179, Ile-181, and Ile-184. The interaction with DNA stretch occupies residues 183-188 (GIGPKT).

Belongs to the Xni family. It depends on Mg(2+) as a cofactor. K(+) serves as cofactor.

In terms of biological role, has flap endonuclease activity. During DNA replication, flap endonucleases cleave the 5'-overhanging flap structure that is generated by displacement synthesis when DNA polymerase encounters the 5'-end of a downstream Okazaki fragment. This is Flap endonuclease Xni from Photorhabdus laumondii subsp. laumondii (strain DSM 15139 / CIP 105565 / TT01) (Photorhabdus luminescens subsp. laumondii).